The chain runs to 938 residues: Isoleucine--tRNA ligase (938 aa).

Residues 58–68 (PYANGSIHIGH) carry the 'HIGH' region motif. Glutamate 561 is an L-isoleucyl-5'-AMP binding site. The short motif at 602–606 (KMSKS) is the 'KMSKS' region element. Lysine 605 contributes to the ATP binding site. Zn(2+) is bound by residues cysteine 901, cysteine 904, cysteine 921, and cysteine 924.

This sequence belongs to the class-I aminoacyl-tRNA synthetase family. IleS type 1 subfamily. Monomer. Zn(2+) serves as cofactor.

It is found in the cytoplasm. The enzyme catalyses tRNA(Ile) + L-isoleucine + ATP = L-isoleucyl-tRNA(Ile) + AMP + diphosphate. Its function is as follows. Catalyzes the attachment of isoleucine to tRNA(Ile). As IleRS can inadvertently accommodate and process structurally similar amino acids such as valine, to avoid such errors it has two additional distinct tRNA(Ile)-dependent editing activities. One activity is designated as 'pretransfer' editing and involves the hydrolysis of activated Val-AMP. The other activity is designated 'posttransfer' editing and involves deacylation of mischarged Val-tRNA(Ile). The sequence is that of Isoleucine--tRNA ligase from Erwinia tasmaniensis (strain DSM 17950 / CFBP 7177 / CIP 109463 / NCPPB 4357 / Et1/99).